The chain runs to 91 residues: Probable Fe(2+)-trafficking protein (91 aa).

Belongs to the Fe(2+)-trafficking protein family.

Functionally, could be a mediator in iron transactions between iron acquisition and iron-requiring processes, such as synthesis and/or repair of Fe-S clusters in biosynthetic enzymes. The sequence is that of Probable Fe(2+)-trafficking protein from Ralstonia nicotianae (strain ATCC BAA-1114 / GMI1000) (Ralstonia solanacearum).